A 95-amino-acid polypeptide reads, in one-letter code: Aspartyl/glutamyl-tRNA(Asn/Gln) amidotransferase subunit C (95 aa).

This sequence belongs to the GatC family. In terms of assembly, heterotrimer of A, B and C subunits.

The catalysed reaction is L-glutamyl-tRNA(Gln) + L-glutamine + ATP + H2O = L-glutaminyl-tRNA(Gln) + L-glutamate + ADP + phosphate + H(+). It carries out the reaction L-aspartyl-tRNA(Asn) + L-glutamine + ATP + H2O = L-asparaginyl-tRNA(Asn) + L-glutamate + ADP + phosphate + 2 H(+). Its function is as follows. Allows the formation of correctly charged Asn-tRNA(Asn) or Gln-tRNA(Gln) through the transamidation of misacylated Asp-tRNA(Asn) or Glu-tRNA(Gln) in organisms which lack either or both of asparaginyl-tRNA or glutaminyl-tRNA synthetases. The reaction takes place in the presence of glutamine and ATP through an activated phospho-Asp-tRNA(Asn) or phospho-Glu-tRNA(Gln). The protein is Aspartyl/glutamyl-tRNA(Asn/Gln) amidotransferase subunit C of Acidithiobacillus ferrooxidans (strain ATCC 23270 / DSM 14882 / CIP 104768 / NCIMB 8455) (Ferrobacillus ferrooxidans (strain ATCC 23270)).